A 297-amino-acid polypeptide reads, in one-letter code: MGFVKVVKNKAYFKRYQVKFRRRREGKTDYYARKRLVIQDKNKYNTPKYRMIVRVTNRDIICQIAYARIEGDMIVCAAYAHKLPKYGVKVGLTNYAAAYCTGLLLARRLLNRFGMDKIYEGQVEVTGDEYNVESIDGQPGAFTCYLDAGLARTTTGNKVFGALKGAVDGGLSIPHSTKRFPGYDSESKEFNAEVHRKHIMGQNVADYMRYLMEEDEDAYKKQFSQYIKNSVTPDMMEEMYKKAHAAIRENPVYEKKPKKEVKKKRWNRPKMSLAQKKDRVAQKKASFLRAQERAAES.

Gly2 carries the N-acetylglycine modification. Lys5 and Lys48 each carry N6-acetyllysine. At Ser185 the chain carries Phosphoserine. Lys220 bears the N6-acetyllysine; alternate mark. Residue Lys220 forms a Glycyl lysine isopeptide (Lys-Gly) (interchain with G-Cter in SUMO1); alternate linkage. Residue Lys220 forms a Glycyl lysine isopeptide (Lys-Gly) (interchain with G-Cter in SUMO2); alternate linkage. At Thr232 the chain carries Phosphothreonine. A disordered region spans residues 253–297 (YEKKPKKEVKKKRWNRPKMSLAQKKDRVAQKKASFLRAQERAAES). The span at 258–268 (KKEVKKKRWNR) shows a compositional bias: basic residues. Ser272 bears the Phosphoserine mark.

It belongs to the universal ribosomal protein uL18 family. In terms of assembly, component of the large ribosomal subunit (LSU). Part of the 5S RNP complex, which is a LSU subcomplex composed of the 5S RNA, RPL5 and RPL11. Component of a hexameric 5S RNP precursor complex, composed of 5S RNA, RRS1, RPF2/BXDC1, RPL5, RPL11 and HEATR3; this complex acts as a precursor for ribosome assembly. Interacts with NVL in an ATP-dependent manner. Interacts with RRP1B. Interacts with IPO5, IPO7 and KPNB1; these interactions may be involved in RPL5 nuclear import for the assembly of ribosomal subunits. Interacts with RRP1B.

It is found in the cytoplasm. Its subcellular location is the nucleus. The protein localises to the nucleolus. Its function is as follows. Component of the ribosome, a large ribonucleoprotein complex responsible for the synthesis of proteins in the cell. The small ribosomal subunit (SSU) binds messenger RNAs (mRNAs) and translates the encoded message by selecting cognate aminoacyl-transfer RNA (tRNA) molecules. The large subunit (LSU) contains the ribosomal catalytic site termed the peptidyl transferase center (PTC), which catalyzes the formation of peptide bonds, thereby polymerizing the amino acids delivered by tRNAs into a polypeptide chain. The nascent polypeptides leave the ribosome through a tunnel in the LSU and interact with protein factors that function in enzymatic processing, targeting, and the membrane insertion of nascent chains at the exit of the ribosomal tunnel. As part of the 5S RNP/5S ribonucleoprotein particle it is an essential component of the LSU, required for its formation and the maturation of rRNAs. It also couples ribosome biogenesis to p53/TP53 activation. As part of the 5S RNP it accumulates in the nucleoplasm and inhibits MDM2, when ribosome biogenesis is perturbed, mediating the stabilization and the activation of TP53. This chain is Large ribosomal subunit protein uL18 (RPL5), found in Macaca fascicularis (Crab-eating macaque).